Reading from the N-terminus, the 158-residue chain is Transcriptional repressor NrdR (158 aa).

The interval 1 to 22 is disordered; that stretch reads MRCPYCGSEDTQVKDSRPAEDN. Residues 3-34 fold into a zinc finger; that stretch reads CPYCGSEDTQVKDSRPAEDNTSIRRRRICPDC. Residues 11 to 22 show a composition bias toward basic and acidic residues; that stretch reads TQVKDSRPAEDN. An ATP-cone domain is found at 49-139; the sequence is LMVIKKTGRK…VYRDFSLAED (91 aa).

The protein belongs to the NrdR family. The cofactor is Zn(2+).

Negatively regulates transcription of bacterial ribonucleotide reductase nrd genes and operons by binding to NrdR-boxes. This chain is Transcriptional repressor NrdR, found in Rhizobium etli (strain CIAT 652).